The chain runs to 289 residues: NAD(P)H-hydrate epimerase (289 aa).

The YjeF N-terminal domain occupies Ala-71–Ile-277. Asn-122–Asp-126 contacts (6S)-NADPHX. K(+) is bound by residues Asn-123 and Asp-185. (6S)-NADPHX-binding positions include Gly-189–Glu-195 and Asp-218. A K(+)-binding site is contributed by Ser-221.

This sequence belongs to the NnrE/AIBP family. K(+) is required as a cofactor.

The enzyme catalyses (6R)-NADHX = (6S)-NADHX. It carries out the reaction (6R)-NADPHX = (6S)-NADPHX. Its function is as follows. Catalyzes the epimerization of the S- and R-forms of NAD(P)HX, a damaged form of NAD(P)H that is a result of enzymatic or heat-dependent hydration. This is a prerequisite for the S-specific NAD(P)H-hydrate dehydratase to allow the repair of both epimers of NAD(P)HX. This is NAD(P)H-hydrate epimerase from Plasmodium knowlesi (strain H).